We begin with the raw amino-acid sequence, 317 residues long: tRNA dimethylallyltransferase (317 aa).

An ATP-binding site is contributed by glycine 14 to threonine 21. Threonine 16–threonine 21 contributes to the substrate binding site. The interaction with substrate tRNA stretch occupies residues aspartate 39–glutamine 42.

The protein belongs to the IPP transferase family. Monomer. Mg(2+) is required as a cofactor.

The enzyme catalyses adenosine(37) in tRNA + dimethylallyl diphosphate = N(6)-dimethylallyladenosine(37) in tRNA + diphosphate. In terms of biological role, catalyzes the transfer of a dimethylallyl group onto the adenine at position 37 in tRNAs that read codons beginning with uridine, leading to the formation of N6-(dimethylallyl)adenosine (i(6)A). The protein is tRNA dimethylallyltransferase of Bacillus cereus (strain AH820).